Consider the following 268-residue polypeptide: Nickel import ATP-binding protein NikE (268 aa).

The region spanning leucine 4–asparagine 252 is the ABC transporter domain. ATP is bound at residue glycine 45 to serine 52.

Belongs to the ABC transporter superfamily. Nickel importer (TC 3.A.1.5.3) family. The complex is composed of two ATP-binding proteins (NikD and NikE), two transmembrane proteins (NikB and NikC) and a solute-binding protein (NikA).

The protein resides in the cell inner membrane. It catalyses the reaction Ni(2+)(out) + ATP + H2O = Ni(2+)(in) + ADP + phosphate + H(+). Part of the ABC transporter complex NikABCDE involved in nickel import. Responsible for energy coupling to the transport system. The protein is Nickel import ATP-binding protein NikE of Escherichia coli O6:K15:H31 (strain 536 / UPEC).